We begin with the raw amino-acid sequence, 343 residues long: tRNA N6-adenosine threonylcarbamoyltransferase (343 aa).

Positions 111 and 115 each coordinate Fe cation. Residues 133–137 (AVSGG), D166, G179, D183, and N273 contribute to the substrate site. D301 is a Fe cation binding site.

This sequence belongs to the KAE1 / TsaD family. The cofactor is Fe(2+).

It localises to the cytoplasm. It catalyses the reaction L-threonylcarbamoyladenylate + adenosine(37) in tRNA = N(6)-L-threonylcarbamoyladenosine(37) in tRNA + AMP + H(+). Functionally, required for the formation of a threonylcarbamoyl group on adenosine at position 37 (t(6)A37) in tRNAs that read codons beginning with adenine. Is involved in the transfer of the threonylcarbamoyl moiety of threonylcarbamoyl-AMP (TC-AMP) to the N6 group of A37, together with TsaE and TsaB. TsaD likely plays a direct catalytic role in this reaction. The protein is tRNA N6-adenosine threonylcarbamoyltransferase of Geotalea uraniireducens (strain Rf4) (Geobacter uraniireducens).